Consider the following 351-residue polypeptide: UDP-3-O-acylglucosamine N-acyltransferase (351 aa).

The Proton acceptor role is filled by H257.

It belongs to the transferase hexapeptide repeat family. LpxD subfamily. As to quaternary structure, homotrimer.

The enzyme catalyses a UDP-3-O-[(3R)-3-hydroxyacyl]-alpha-D-glucosamine + a (3R)-hydroxyacyl-[ACP] = a UDP-2-N,3-O-bis[(3R)-3-hydroxyacyl]-alpha-D-glucosamine + holo-[ACP] + H(+). The protein operates within bacterial outer membrane biogenesis; LPS lipid A biosynthesis. Its function is as follows. Catalyzes the N-acylation of UDP-3-O-acylglucosamine using 3-hydroxyacyl-ACP as the acyl donor. Is involved in the biosynthesis of lipid A, a phosphorylated glycolipid that anchors the lipopolysaccharide to the outer membrane of the cell. In Methylorubrum extorquens (strain CM4 / NCIMB 13688) (Methylobacterium extorquens), this protein is UDP-3-O-acylglucosamine N-acyltransferase.